The sequence spans 267 residues: Regulatory protein RecX (267 aa).

It belongs to the RecX family.

The protein localises to the cytoplasm. Functionally, modulates RecA activity. The sequence is that of Regulatory protein RecX from Leuconostoc mesenteroides subsp. mesenteroides (strain ATCC 8293 / DSM 20343 / BCRC 11652 / CCM 1803 / JCM 6124 / NCDO 523 / NBRC 100496 / NCIMB 8023 / NCTC 12954 / NRRL B-1118 / 37Y).